Here is a 403-residue protein sequence, read N- to C-terminus: MSKFNRIHLVVLDSVGIGAAPDANNFVNAGVPDGASDTLGHISKTVGLNVPNMAKIGLGNIPRETPLKTVAAESNPTGYATKLEEVSLGKDTMTGHWEIMGLNITEPFDTFWNGFPEEILTKIEEFSGRKVIREANKPYSGTAVIDDFGPRQMETGELIIYTSADPVLQIAAHEDIIPLDELYRICEYARSITLERPALLGRIIARPYVGEPGNFTRTANRRDLAVSPFAPTVLDKLNEAGIDTYAVGKINDIFNGAGINHDMGHNKSNSHGIDTLLKTMGLAEFEKGFSFTNLVDFDALYGHRRNAHGYRDCLHEFDERLPEIIAAMRENDLLLITADHGNDPTYAGTDHTREYIPLLAYSPAFKGNGVIPVGHFADISATVADNFGVETAMIGESFLDKLV.

6 residues coordinate Mn(2+): D13, D298, H303, D339, H340, and H351.

The protein belongs to the phosphopentomutase family. Mn(2+) is required as a cofactor.

Its subcellular location is the cytoplasm. It catalyses the reaction 2-deoxy-alpha-D-ribose 1-phosphate = 2-deoxy-D-ribose 5-phosphate. The enzyme catalyses alpha-D-ribose 1-phosphate = D-ribose 5-phosphate. It participates in carbohydrate degradation; 2-deoxy-D-ribose 1-phosphate degradation; D-glyceraldehyde 3-phosphate and acetaldehyde from 2-deoxy-alpha-D-ribose 1-phosphate: step 1/2. In terms of biological role, isomerase that catalyzes the conversion of deoxy-ribose 1-phosphate (dRib-1-P) and ribose 1-phosphate (Rib-1-P) to deoxy-ribose 5-phosphate (dRib-5-P) and ribose 5-phosphate (Rib-5-P), respectively. This Streptococcus pneumoniae (strain Hungary19A-6) protein is Phosphopentomutase.